The chain runs to 180 residues: ATP synthase subunit delta (180 aa).

Belongs to the ATPase delta chain family. As to quaternary structure, F-type ATPases have 2 components, F(1) - the catalytic core - and F(0) - the membrane proton channel. F(1) has five subunits: alpha(3), beta(3), gamma(1), delta(1), epsilon(1). CF(0) has four main subunits: a(1), b(1), b'(1) and c(10-14). The alpha and beta chains form an alternating ring which encloses part of the gamma chain. F(1) is attached to F(0) by a central stalk formed by the gamma and epsilon chains, while a peripheral stalk is formed by the delta, b and b' chains.

The protein localises to the cellular thylakoid membrane. Its function is as follows. F(1)F(0) ATP synthase produces ATP from ADP in the presence of a proton or sodium gradient. F-type ATPases consist of two structural domains, F(1) containing the extramembraneous catalytic core and F(0) containing the membrane proton channel, linked together by a central stalk and a peripheral stalk. During catalysis, ATP synthesis in the catalytic domain of F(1) is coupled via a rotary mechanism of the central stalk subunits to proton translocation. In terms of biological role, this protein is part of the stalk that links CF(0) to CF(1). It either transmits conformational changes from CF(0) to CF(1) or is implicated in proton conduction. In Synechococcus elongatus (strain ATCC 33912 / PCC 7942 / FACHB-805) (Anacystis nidulans R2), this protein is ATP synthase subunit delta.